The following is a 358-amino-acid chain: tRNA-specific 2-thiouridylase MnmA (358 aa).

ATP contacts are provided by residues 6-13 and Met32; that span reads ALSGGVDS. Cys103 serves as the catalytic Nucleophile. Cys103 and Cys201 are disulfide-bonded. Gly127 is a binding site for ATP. The tract at residues 151-153 is interaction with tRNA; that stretch reads KDQ. The Cysteine persulfide intermediate role is filled by Cys201.

This sequence belongs to the MnmA/TRMU family.

The protein localises to the cytoplasm. The enzyme catalyses S-sulfanyl-L-cysteinyl-[protein] + uridine(34) in tRNA + AH2 + ATP = 2-thiouridine(34) in tRNA + L-cysteinyl-[protein] + A + AMP + diphosphate + H(+). Catalyzes the 2-thiolation of uridine at the wobble position (U34) of tRNA, leading to the formation of s(2)U34. The chain is tRNA-specific 2-thiouridylase MnmA from Thermotoga neapolitana (strain ATCC 49049 / DSM 4359 / NBRC 107923 / NS-E).